Reading from the N-terminus, the 98-residue chain is Toxin ParE1 (98 aa).

This sequence belongs to the RelE toxin family.

Its function is as follows. Toxic component of a type II toxin-antitoxin (TA) system. Its toxic effect is neutralized by coexpression with cognate antitoxin ParD1. The polypeptide is Toxin ParE1 (parE1) (Mycobacterium tuberculosis (strain CDC 1551 / Oshkosh)).